The primary structure comprises 190 residues: Translation initiation factor IF-3 (190 aa).

The protein belongs to the IF-3 family. As to quaternary structure, monomer.

The protein localises to the cytoplasm. IF-3 binds to the 30S ribosomal subunit and shifts the equilibrium between 70S ribosomes and their 50S and 30S subunits in favor of the free subunits, thus enhancing the availability of 30S subunits on which protein synthesis initiation begins. In Prochlorococcus marinus (strain MIT 9312), this protein is Translation initiation factor IF-3.